The primary structure comprises 319 residues: F-box only protein 8 (319 aa).

Residues 68 to 111 (FINLEMLPPELSFTILSYLNATDLCLASCVWQDLANDELLWQGL) enclose the F-box domain. Residues 146–276 (FNANPEEGVS…LILLSIDLTS (131 aa)) enclose the SEC7 domain.

As to expression, high expression in brain, heart, kidney, liver, lung, skeletal muscle, testis, and day-7 embryos.

In terms of biological role, may promote guanine-nucleotide exchange on an ARF. Promotes the activation of ARF through replacement of GDP with GTP (Potential). The polypeptide is F-box only protein 8 (Fbxo8) (Mus musculus (Mouse)).